Here is a 208-residue protein sequence, read N- to C-terminus: Imidazoleglycerol-phosphate dehydratase (208 aa).

The tract at residues methionine 1–alanine 20 is disordered. Positions valine 7–glycine 19 are enriched in low complexity.

This sequence belongs to the imidazoleglycerol-phosphate dehydratase family.

It is found in the cytoplasm. The catalysed reaction is D-erythro-1-(imidazol-4-yl)glycerol 3-phosphate = 3-(imidazol-4-yl)-2-oxopropyl phosphate + H2O. It participates in amino-acid biosynthesis; L-histidine biosynthesis; L-histidine from 5-phospho-alpha-D-ribose 1-diphosphate: step 6/9. This is Imidazoleglycerol-phosphate dehydratase from Anaeromyxobacter sp. (strain K).